Here is a 168-residue protein sequence, read N- to C-terminus: Crossover junction endodeoxyribonuclease RuvC (168 aa).

Residues Asp10, Glu70, and Asp143 contribute to the active site. Positions 10, 70, and 143 each coordinate Mg(2+).

Belongs to the RuvC family. As to quaternary structure, homodimer which binds Holliday junction (HJ) DNA. The HJ becomes 2-fold symmetrical on binding to RuvC with unstacked arms; it has a different conformation from HJ DNA in complex with RuvA. In the full resolvosome a probable DNA-RuvA(4)-RuvB(12)-RuvC(2) complex forms which resolves the HJ. Mg(2+) serves as cofactor.

Its subcellular location is the cytoplasm. It carries out the reaction Endonucleolytic cleavage at a junction such as a reciprocal single-stranded crossover between two homologous DNA duplexes (Holliday junction).. Functionally, the RuvA-RuvB-RuvC complex processes Holliday junction (HJ) DNA during genetic recombination and DNA repair. Endonuclease that resolves HJ intermediates. Cleaves cruciform DNA by making single-stranded nicks across the HJ at symmetrical positions within the homologous arms, yielding a 5'-phosphate and a 3'-hydroxyl group; requires a central core of homology in the junction. The consensus cleavage sequence is 5'-(A/T)TT(C/G)-3'. Cleavage occurs on the 3'-side of the TT dinucleotide at the point of strand exchange. HJ branch migration catalyzed by RuvA-RuvB allows RuvC to scan DNA until it finds its consensus sequence, where it cleaves and resolves the cruciform DNA. This is Crossover junction endodeoxyribonuclease RuvC from Thermotoga maritima (strain ATCC 43589 / DSM 3109 / JCM 10099 / NBRC 100826 / MSB8).